We begin with the raw amino-acid sequence, 305 residues long: Glutaminase (305 aa).

S61, N113, E158, N165, Y189, Y241, and V259 together coordinate substrate.

It belongs to the glutaminase family. Homotetramer.

The catalysed reaction is L-glutamine + H2O = L-glutamate + NH4(+). This Clostridium botulinum (strain Kyoto / Type A2) protein is Glutaminase.